Reading from the N-terminus, the 296-residue chain is Cytochrome bc1 complex cytochrome c subunit (296 aa).

Residues 1-19 (MMETNPQTSEGAGKAQSSA) are compositionally biased toward polar residues. The tract at residues 1 to 27 (MMETNPQTSEGAGKAQSSAKKVKNRRK) is disordered. A helical membrane pass occupies residues 32–52 (VAGAMALTIGLSGAGILATAI). Cytochrome c domains lie at 67-147 (ALIA…AANG) and 177-255 (LDVS…KSTK). Residues cysteine 80, cysteine 83, histidine 84, cysteine 190, cysteine 193, and histidine 194 each coordinate heme c. Residues 274–294 (GLFMWGIGIMVLIAAAMWIGS) form a helical membrane-spanning segment.

In terms of assembly, the cytochrome bc1 complex is composed of a cytochrome b (QcrB), the Rieske iron-sulfur protein (QcrA) and a diheme cytochrome c (QcrC) subunit. The bc1 complex forms a supercomplex with cytochrome c oxidase (cytochrome aa3). In terms of processing, binds 2 heme c groups covalently per subunit.

It is found in the cell membrane. It catalyses the reaction a quinol + 2 Fe(III)-[cytochrome c](out) = a quinone + 2 Fe(II)-[cytochrome c](out) + 2 H(+)(out). Functionally, cytochrome c1 subunit of the cytochrome bc1 complex, an essential component of the respiratory electron transport chain required for ATP synthesis. The bc1 complex catalyzes the oxidation of menaquinol and the reduction of cytochrome c in the respiratory chain. The bc1 complex operates through a Q-cycle mechanism that couples electron transfer to generation of the proton gradient that drives ATP synthesis. This Corynebacterium efficiens (strain DSM 44549 / YS-314 / AJ 12310 / JCM 11189 / NBRC 100395) protein is Cytochrome bc1 complex cytochrome c subunit (qcrC).